Here is a 66-residue protein sequence, read N- to C-terminus: Large ribosomal subunit protein bL33 (66 aa).

The protein belongs to the bacterial ribosomal protein bL33 family.

This chain is Large ribosomal subunit protein bL33, found in Synechococcus sp. (strain CC9311).